The chain runs to 204 residues: Transcriptional regulator GfcR (204 aa).

The protein belongs to the purine/pyrimidine phosphoribosyltransferase family. GfcR subfamily.

The protein is Transcriptional regulator GfcR of Methanosarcina mazei (strain ATCC BAA-159 / DSM 3647 / Goe1 / Go1 / JCM 11833 / OCM 88) (Methanosarcina frisia).